The chain runs to 396 residues: Cytochrome b (396 aa).

4 helical membrane-spanning segments follow: residues 32-52, 76-98, 113-133, and 179-199; these read FGSL…TLAM, WLLR…LHIG, LWSI…IGYV, and FFSL…MHLL. Residues His-82 and His-96 each coordinate heme b. The heme b site is built by His-183 and His-197. His-202 lines the a ubiquinone pocket. Transmembrane regions (helical) follow at residues 225 to 245, 289 to 309, 321 to 341, and 348 to 368; these read FTSK…IFVF, LGGV…ALIH, LLNL…WVGA, and YILI…ILMI.

It belongs to the cytochrome b family. In terms of assembly, fungal cytochrome b-c1 complex contains 10 subunits; 3 respiratory subunits, 2 core proteins and 5 low-molecular weight proteins. Cytochrome b-c1 complex is a homodimer. It depends on heme b as a cofactor.

The protein resides in the mitochondrion inner membrane. In terms of biological role, component of the ubiquinol-cytochrome c reductase complex (complex III or cytochrome b-c1 complex) that is part of the mitochondrial respiratory chain. The b-c1 complex mediates electron transfer from ubiquinol to cytochrome c. Contributes to the generation of a proton gradient across the mitochondrial membrane that is then used for ATP synthesis. The protein is Cytochrome b (cob) of Spizellomyces punctatus.